The chain runs to 101 residues: Apolipoprotein C-II (101 aa).

Residues 1–22 (MGARHLLALLLVLLVLGFEVQG) form the signal peptide. A lipid binding region spans residues 66-74 (TMDEKIRDM). A lipoprotein lipase cofactor region spans residues 78-101 (STAAVSTYVGIFTDQLLSLLKGDE).

It belongs to the apolipoprotein C2 family. Proapolipoprotein C-II is synthesized as a sialic acid containing glycoprotein which is subsequently desialylated prior to its proteolytic processing. In terms of processing, proapolipoprotein C-II, the major form found in plasma undergoes proteolytic cleavage of its N-terminal hexapeptide to generate apolipoprotein C-II, which occurs as the minor form in plasma.

Its subcellular location is the secreted. In terms of biological role, component of chylomicrons, very low-density lipoproteins (VLDL), low-density lipoproteins (LDL), and high-density lipoproteins (HDL) in plasma. Plays an important role in lipoprotein metabolism as an activator of lipoprotein lipase. Both proapolipoprotein C-II and apolipoprotein C-II can activate lipoprotein lipase. In Tapirus indicus (Asiatic tapir), this protein is Apolipoprotein C-II (APOC2).